Consider the following 500-residue polypeptide: Oogenesin-3 (500 aa).

The stretch at 116 to 143 (RCKLRVLKWRDEQHDFCGIWPGSHEAED) is one LRR 1; degenerate repeat. An LRR 2; degenerate repeat occupies 198–222 (HLLCRKLVIETLTKDTVIEIFKIVN). The LRR 3; degenerate repeat unit spans residues 223–248 (ADCIQELELYSLCLEDLAFLNPYLRQ). The stretch at 249–285 (MDNLLELTLDHVTDSLSMGDSEMCEEEMITLVSQLPT) is one LRR 4; degenerate repeat. LRR repeat units lie at residues 286–311 (FPCL…LRCL), 312–343 (KKPL…FELK), 344–367 (CLYL…LESV), 368–395 (RHTL…ALSQ), and 396–420 (CSHL…LLQH).

The protein belongs to the PRAME family. As to expression, expressed in ovary, specifically in oocytes. Detected in follicles with two layers of granulosa cells, and are present in early as well as large antral follicles.

In Mus musculus (Mouse), this protein is Oogenesin-3.